Consider the following 110-residue polypeptide: Parvalbumin alpha (110 aa).

Serine 2 is subject to N-acetylserine. Residues serine 2 and serine 24 each carry the phosphoserine modification. 2 EF-hand domains span residues 39-74 and 78-110; these read KSAD…FSPD and LSAK…VAES. Residues aspartate 52, aspartate 54, serine 56, phenylalanine 58, glutamate 60, glutamate 63, aspartate 91, aspartate 93, aspartate 95, lysine 97, and glutamate 102 each contribute to the Ca(2+) site.

Its function is as follows. In muscle, parvalbumin is thought to be involved in relaxation after contraction. It binds two calcium ions. The chain is Parvalbumin alpha (PVALB) from Homo sapiens (Human).